The following is a 194-amino-acid chain: Clathrin light chain (194 aa).

The segment at 44 to 156 is disordered; the sequence is TTFDNSNNNN…TDSTSGNTTH (113 aa). Residues 48 to 65 are compositionally biased toward low complexity; the sequence is NSNNNNNNNNHNNNSYNS. Basic and acidic residues-rich tracts occupy residues 89–115 and 124–146; these read EYLE…KIAE and YSER…KSLE. The segment at 124-194 is required for binding clathrin heavy chain, localization to punctae, and for cytokinesis and fruiting body development; that stretch reads YSEREAKKKT…LIRLKNQPIV (71 aa). Polar residues predominate over residues 147-156; the sequence is TDSTSGNTTH.

It belongs to the clathrin light chain family. In terms of assembly, clathrin coats are formed from molecules containing 3 heavy chains and 3 light chains.

It localises to the cytoplasmic vesicle membrane. Its subcellular location is the membrane. The protein resides in the coated pit. In terms of biological role, clathrin is the major protein of the polyhedral coat of coated pits and vesicles. This Dictyostelium discoideum (Social amoeba) protein is Clathrin light chain (clc).